The chain runs to 210 residues: MVNCVVRNWQGEDAGQAELDLKVANEENAAHIVHRALRRQMNNARQGTASSKTRSEVRGGGRKPWRQKGTGRARAGSSRSPLWRGGGVIFGPKPRSYSTKMNRKERRLALRTAFASRAEDLVVVEDFGDNLSRPKTKDLLEAMGRWGVNADSKTLLILADKHDTIYLSARNVEKLKLILASNLNVYDLLAADQIVATQSAIAKIQEVYSD.

The span at 41-52 (MNNARQGTASSK) shows a compositional bias: polar residues. The segment at 41 to 80 (MNNARQGTASSKTRSEVRGGGRKPWRQKGTGRARAGSSRS) is disordered. Basic residues predominate over residues 60–71 (GGRKPWRQKGTG).

The protein belongs to the universal ribosomal protein uL4 family. Part of the 50S ribosomal subunit.

Functionally, one of the primary rRNA binding proteins, this protein initially binds near the 5'-end of the 23S rRNA. It is important during the early stages of 50S assembly. It makes multiple contacts with different domains of the 23S rRNA in the assembled 50S subunit and ribosome. In terms of biological role, forms part of the polypeptide exit tunnel. In Acaryochloris marina (strain MBIC 11017), this protein is Large ribosomal subunit protein uL4.